The chain runs to 174 residues: RNA pyrophosphohydrolase (174 aa).

The Nudix hydrolase domain occupies 6-149 (GFRANVGIVI…KREVYRRAMK (144 aa)). Residues 38–59 (GGIDEGETAEQTMYRELYEEVG) carry the Nudix box motif.

This sequence belongs to the Nudix hydrolase family. RppH subfamily. A divalent metal cation serves as cofactor.

Accelerates the degradation of transcripts by removing pyrophosphate from the 5'-end of triphosphorylated RNA, leading to a more labile monophosphorylated state that can stimulate subsequent ribonuclease cleavage. The chain is RNA pyrophosphohydrolase from Pseudoalteromonas atlantica (strain T6c / ATCC BAA-1087).